The chain runs to 261 residues: U1 small nuclear ribonucleoprotein 70 kDa homolog (261 aa).

The region spanning 100–178 (KTMFLSRLSY…RRIVVDVERG (79 aa)) is the RRM domain. Residues 192-261 (GLGGRHYTKE…DSSPKRRRYN (70 aa)) are disordered. Over residues 198 to 215 (YTKERPRRERGSRFRGDS) the composition is skewed to basic and acidic residues. Residues 216 to 235 (GFRGGYRGGFRKSSGGGSRF) are compositionally biased toward gly residues.

In terms of assembly, component of the spliceosome, where it is associated with snRNP U1. Associates with U1 snRNA.

The protein localises to the nucleus. In terms of biological role, involved in nuclear mRNA splicing. Essential for growth. This is U1 small nuclear ribonucleoprotein 70 kDa homolog from Schizosaccharomyces pombe (strain 972 / ATCC 24843) (Fission yeast).